Reading from the N-terminus, the 143-residue chain is Small ribosomal subunit protein uS12 (143 aa).

A Hydroxyproline modification is found at P62.

The protein belongs to the universal ribosomal protein uS12 family. Component of the 40S small ribosomal subunit.

It is found in the cytoplasm. The protein localises to the cytosol. The protein resides in the rough endoplasmic reticulum. This Ciona intestinalis (Transparent sea squirt) protein is Small ribosomal subunit protein uS12 (RPS23).